Reading from the N-terminus, the 453-residue chain is Maltotriose-binding protein (453 aa).

The N-terminal stretch at methionine 1–threonine 29 is a signal peptide. Residues threonine 27 to glutamate 65 show a composition bias toward low complexity. The disordered stretch occupies residues threonine 27 to alanine 73.

This sequence belongs to the bacterial solute-binding protein 1 family.

Its function is as follows. Involved in an abc transport system for maltotriose. The polypeptide is Maltotriose-binding protein (malE) (Pyrococcus abyssi (strain GE5 / Orsay)).